Here is a 352-residue protein sequence, read N- to C-terminus: Holliday junction branch migration complex subunit RuvB (352 aa).

The large ATPase domain (RuvB-L) stretch occupies residues 13 to 201 (LPLRKKELRL…FGISQKIEFY (189 aa)). Residues Arg41, Gly82, Lys85, Thr86, Thr87, 148–150 (EDF), Arg191, Tyr201, and Arg238 each bind ATP. Mg(2+) is bound at residue Thr86. The interval 202–273 (NYDELKQILL…LIKKALNSYQ (72 aa)) is small ATPAse domain (RuvB-S). Residues 276–352 (DKGLDSLDRH…KYIDSKNDDF (77 aa)) form a head domain (RuvB-H) region. 2 residues coordinate DNA: Arg330 and Arg335.

The protein belongs to the RuvB family. As to quaternary structure, homohexamer. Forms an RuvA(8)-RuvB(12)-Holliday junction (HJ) complex. HJ DNA is sandwiched between 2 RuvA tetramers; dsDNA enters through RuvA and exits via RuvB. An RuvB hexamer assembles on each DNA strand where it exits the tetramer. Each RuvB hexamer is contacted by two RuvA subunits (via domain III) on 2 adjacent RuvB subunits; this complex drives branch migration. In the full resolvosome a probable DNA-RuvA(4)-RuvB(12)-RuvC(2) complex forms which resolves the HJ.

Its subcellular location is the cytoplasm. It carries out the reaction ATP + H2O = ADP + phosphate + H(+). In terms of biological role, the RuvA-RuvB-RuvC complex processes Holliday junction (HJ) DNA during genetic recombination and DNA repair, while the RuvA-RuvB complex plays an important role in the rescue of blocked DNA replication forks via replication fork reversal (RFR). RuvA specifically binds to HJ cruciform DNA, conferring on it an open structure. The RuvB hexamer acts as an ATP-dependent pump, pulling dsDNA into and through the RuvAB complex. RuvB forms 2 homohexamers on either side of HJ DNA bound by 1 or 2 RuvA tetramers; 4 subunits per hexamer contact DNA at a time. Coordinated motions by a converter formed by DNA-disengaged RuvB subunits stimulates ATP hydrolysis and nucleotide exchange. Immobilization of the converter enables RuvB to convert the ATP-contained energy into a lever motion, pulling 2 nucleotides of DNA out of the RuvA tetramer per ATP hydrolyzed, thus driving DNA branch migration. The RuvB motors rotate together with the DNA substrate, which together with the progressing nucleotide cycle form the mechanistic basis for DNA recombination by continuous HJ branch migration. Branch migration allows RuvC to scan DNA until it finds its consensus sequence, where it cleaves and resolves cruciform DNA. This Prochlorococcus marinus (strain MIT 9301) protein is Holliday junction branch migration complex subunit RuvB.